We begin with the raw amino-acid sequence, 293 residues long: Small ribosomal subunit biogenesis GTPase RsgA (293 aa).

The 161-residue stretch at 63-223 (KNELVRPPIA…VADTPGFSSL (161 aa)) folds into the CP-type G domain. GTP-binding positions include 112 to 115 (SKMD) and 166 to 174 (GQSGVGKSS). Residues Cys247, Cys252, His254, and Cys260 each coordinate Zn(2+).

The protein belongs to the TRAFAC class YlqF/YawG GTPase family. RsgA subfamily. As to quaternary structure, monomer. Associates with 30S ribosomal subunit, binds 16S rRNA. It depends on Zn(2+) as a cofactor.

It localises to the cytoplasm. Functionally, one of several proteins that assist in the late maturation steps of the functional core of the 30S ribosomal subunit. Helps release RbfA from mature subunits. May play a role in the assembly of ribosomal proteins into the subunit. Circularly permuted GTPase that catalyzes slow GTP hydrolysis, GTPase activity is stimulated by the 30S ribosomal subunit. In Bacillus cereus (strain ATCC 10987 / NRS 248), this protein is Small ribosomal subunit biogenesis GTPase RsgA.